The sequence spans 562 residues: Tissue-type plasminogen activator (562 aa).

Positions 1 to 20 (MNAMKRGLCCVLLLCGAVFA) are cleaved as a signal peptide. Positions 21 to 32 (LPSQEIHARVRR) are excised as a propeptide. A propeptide spans 33–35 (GAR) (removed by plasmin). Residues 39–81 (VICRDEKTQMIYQQHQSWLRPVLRSNRVEYCWCNSGRAQCHSV) form the Fibronectin type-I domain. 17 disulfides stabilise this stretch: Cys41–Cys71, Cys69–Cys78, Cys86–Cys97, Cys91–Cys108, Cys110–Cys119, Cys127–Cys208, Cys148–Cys190, Cys179–Cys203, Cys215–Cys296, Cys236–Cys278, Cys267–Cys291, Cys299–Cys430, Cys342–Cys358, Cys350–Cys419, Cys444–Cys519, Cys476–Cys492, and Cys509–Cys537. Residues 42–52 (RDEKTQMIYQQ) are important for binding to annexin A2. In terms of domain architecture, EGF-like spans 82-120 (PVRSCSEPRCFNGGTCQQALYFSDFVCQCPEGFAGKCCE). Thr96 is a glycosylation site (O-linked (Fuc) threonine). Kringle domains lie at 126-208 (TCYE…TPAC) and 214-296 (DCYF…VPSC). Asn152 carries an N-linked (GlcNAc...) asparagine glycan. The Peptidase S1 domain maps to 311–561 (IKGGLFADIA…YLDWIHDNMR (251 aa)). Active-site charge relay system residues include His357 and Asp406. An N-linked (GlcNAc...) asparagine glycan is attached at Asn483. Ser513 functions as the Charge relay system in the catalytic mechanism.

The protein belongs to the peptidase S1 family. As to quaternary structure, heterodimer of chain A and chain B held by a disulfide bond. Binds to fibrin with high affinity. This interaction leads to an increase in the catalytic efficiency of the enzyme due to an increase in affinity for plasminogen. Similarly, binding to heparin increases the activation of plasminogen. Binds to annexin A2, cytokeratin-8, fibronectin and laminin. Binds to mannose receptor and the low-density lipoprotein receptor-related protein (LRP1); these proteins are involved in TPA clearance. Binds LRP1B; binding is followed by internalization and degradation. Forms heterodimer with SERPINA5. Interacts with SERPINE1. In complex with SERPINE1, interacts with SORL1. In terms of processing, the single chain, almost fully active enzyme, can be further processed into a two-chain fully active form by a cleavage after Arg-310 catalyzed by plasmin, tissue kallikrein or factor Xa.

It localises to the secreted. The protein localises to the extracellular space. The catalysed reaction is Specific cleavage of Arg-|-Val bond in plasminogen to form plasmin.. Inhibited by SERPINA5. Inhibited by SERPINE1. Converts the abundant, but inactive, zymogen plasminogen to plasmin by hydrolyzing a single Arg-Val bond in plasminogen. By controlling plasmin-mediated proteolysis, it plays an important role in tissue remodeling and degradation, in cell migration and many other physiopathological events. During oocyte activation, plays a role in cortical granule reaction in the zona reaction, which contributes to the block to polyspermy. The chain is Tissue-type plasminogen activator (PLAT) from Pongo abelii (Sumatran orangutan).